The primary structure comprises 379 residues: Ascochitine biosynthesis cluster protein 8 (379 aa).

The next 3 membrane-spanning stretches (helical) occupy residues 87-107 (ELIA…LDLE), 116-136 (VGPV…VAAC), and 141-161 (IKVF…VVAL).

It is found in the membrane. It participates in mycotoxin biosynthesis. In terms of biological role, part of the gene cluster that mediates the biosynthesis of the selective antifungal agent ascochitine, an o-quinone methide that plays a possible protective role against other microbial competitors in nature and is considered to be important for pathogenicity of legume-associated Didymella species. The pathway probably begins with the synthesis of a keto-aldehyde intermediate by the ascochitine non-reducing polyketide synthase pksAC from successive condensations of 4 malonyl-CoA units, presumably with a simple acetyl-CoA starter unit. Release of the keto-aldehyde intermediate is consistent with the presence of the C-terminal reductive release domain. The HR-PKS (orf7) probably makes a diketide starter unit which is passed to the non-reducing polyketide synthase pksAC for further extension, producing ascochital and ascochitine. The aldehyde dehydrogenase (orf1), the 2-oxoglutarate-dependent dioxygenase (orf3) and the dehydrogenase (orf9) are probably involved in subsequent oxidations of methyl groups to the carboxylic acid of the heterocyclic ring. The ascochitine gene cluster also includes a gene encoding a short peptide with a cupin domain (orf2) that is often found in secondary metabolite gene clusters and which function has still to be determined. In Didymella fabae (Leaf and pod spot disease fungus), this protein is Ascochitine biosynthesis cluster protein 8.